Here is a 168-residue protein sequence, read N- to C-terminus: ATP synthase subunit b (168 aa).

The helical transmembrane segment at 11–31 (EISIINTLWYLIVFSILLLAV) threads the bilayer.

It belongs to the ATPase B chain family. In terms of assembly, F-type ATPases have 2 components, F(1) - the catalytic core - and F(0) - the membrane proton channel. F(1) has five subunits: alpha(3), beta(3), gamma(1), delta(1), epsilon(1). F(0) has three main subunits: a(1), b(2) and c(10-14). The alpha and beta chains form an alternating ring which encloses part of the gamma chain. F(1) is attached to F(0) by a central stalk formed by the gamma and epsilon chains, while a peripheral stalk is formed by the delta and b chains.

It localises to the cell membrane. Its function is as follows. F(1)F(0) ATP synthase produces ATP from ADP in the presence of a proton or sodium gradient. F-type ATPases consist of two structural domains, F(1) containing the extramembraneous catalytic core and F(0) containing the membrane proton channel, linked together by a central stalk and a peripheral stalk. During catalysis, ATP synthesis in the catalytic domain of F(1) is coupled via a rotary mechanism of the central stalk subunits to proton translocation. Functionally, component of the F(0) channel, it forms part of the peripheral stalk, linking F(1) to F(0). In Lactobacillus delbrueckii subsp. bulgaricus (strain ATCC 11842 / DSM 20081 / BCRC 10696 / JCM 1002 / NBRC 13953 / NCIMB 11778 / NCTC 12712 / WDCM 00102 / Lb 14), this protein is ATP synthase subunit b.